The primary structure comprises 121 residues: MGIEEFGGGQAAQADVLVVTTNDVPGYQVTQVIGEVFGLTVRSRHLGSQIGAGLKSMIGGELKGLTKTLVETRNQAMERLVEQARARGANAVLMMRFDVTEAADVGTEVCAYGTAAVISKV.

The protein belongs to the UPF0145 family.

The chain is UPF0145 protein SGR_4080 from Streptomyces griseus subsp. griseus (strain JCM 4626 / CBS 651.72 / NBRC 13350 / KCC S-0626 / ISP 5235).